We begin with the raw amino-acid sequence, 47 residues long: UPF0391 membrane protein rrnAC2507 (47 aa).

Helical transmembrane passes span 5-25 (VVLV…IAGL) and 27-47 (FRVA…TFLL).

Belongs to the UPF0391 family.

The protein resides in the cell membrane. The sequence is that of UPF0391 membrane protein rrnAC2507 from Haloarcula marismortui (strain ATCC 43049 / DSM 3752 / JCM 8966 / VKM B-1809) (Halobacterium marismortui).